A 752-amino-acid chain; its full sequence is MSAAEIDEGVFETTATIDNGSFGTRTIRFETGRLALQAAGAVVAYLDDDNMLLSATTASKNPKEHFDFFPLTVDVEERMYAAGRIPGSFFRREGRPSTDAILTCRLIDRPLRPSFVDGLRNEIQIVVTILSLDPGDLYDVLAINAASASTQLGGLPFSGPIGGVRVALIDGTWVGFPTVDQIERAVFDMVVAGRIVEGDVAIMMVEAEATENVVELVEGGAQAPTESVVAAGLEAAKPFIAALCTAQQELADAAGKSGKPTVDFPVFPDYGEDVYYSVSSVATDELAAALTIGGKAERDQRIDEIKTQVVQRLADTYEGREKEVGAALRALTKKLVRQRILTDHFRIDGRGITDIRALSAEVAVVPRAHGSALFERGETQILGVTTLDMIKMAQQIDSLGPETSKRYMHHYNFPPFSTGETGRVGSPKRREIGHGALAERALVPVLPSVEEFPYAIRQVSEALGSNGSTSMGSVCASTLALLNAGVPLKAPVAGIAMGLVSDDIQVEGAVDGVVERRFVTLTDILGAEDAFGDMDFKVAGTKDFVTALQLDTKLDGIPSQVLAGALEQAKDARLTILEVMAEAIDRPDEMSPYAPRVTTIKVPVDKIGEVIGPKGKVINAITEETGAQISIEDDGTVFVGATDGPSAQAAIDKINAIANPQLPTVGERFLGTVVKTTDFGAFVSLLPGRDGLVHISKLGKGKRIAKVEDVVNVGDKLRVEIADIDKRGKISLILVADEDSTAAATDAATVTS.

Mg(2+) contacts are provided by Asp529 and Asp535. The region spanning 595–654 (PRVTTIKVPVDKIGEVIGPKGKVINAITEETGAQISIEDDGTVFVGATDGPSAQAAIDKI) is the KH domain. The S1 motif domain maps to 666–735 (GERFLGTVVK…KRGKISLILV (70 aa)).

Belongs to the polyribonucleotide nucleotidyltransferase family. Mg(2+) is required as a cofactor.

The protein resides in the cytoplasm. It carries out the reaction RNA(n+1) + phosphate = RNA(n) + a ribonucleoside 5'-diphosphate. Functionally, involved in mRNA degradation. Catalyzes the phosphorolysis of single-stranded polyribonucleotides processively in the 3'- to 5'-direction. The protein is Polyribonucleotide nucleotidyltransferase of Mycobacterium tuberculosis (strain ATCC 25177 / H37Ra).